An 877-amino-acid chain; its full sequence is Transcriptional corepressor SEUSS (877 aa).

2 disordered regions span residues 1–42 (MVPS…VSPR) and 272–295 (LKSM…PLRP). Residues 272–292 (LKSMPQQRPQLPQQFQQQNLP) show a composition bias toward low complexity. The tract at residues 321-563 (PEDNNIEFWR…ETRTGPIESL (243 aa)) is dimerization. Positions 330–344 (RKFVAEYFAPNAKKR) match the Nuclear localization signal motif. Disordered stretches follow at residues 560–599 (IESL…QQQQ), 612–633 (QQTV…LMQG), and 666–753 (GRHQ…NESS). Residues 582–618 (QQASDQLRQQQQQQQQQQQQQQQQQQQQQQQQTVSQN) adopt a coiled-coil conformation. Over residues 590–599 (QQQQQQQQQQ) the composition is skewed to low complexity. Polar residues predominate over residues 614-633 (TVSQNTNSDQSSRQVALMQG). 2 stretches are compositionally biased toward low complexity: residues 688–703 (QSPS…SSQQ) and 711–725 (QSPT…PSQN). A compositionally biased stretch (polar residues) spans 726–741 (GIPSVNHMGSTNSPAM).

Belongs to the adn1/SEU family. Forms a corepressor complex with LUG; LUG is the transcription repressor subunit and SEU the specific DNA-binding adapter. Interacts with AGL24-AP1 and SVP-AP1 dimers when complexed to SEU. Interacts with AP1/AGL7 and SEP3/AGL9. Binds to LUH. In terms of tissue distribution, expressed in root, leaves, seedlings, vegetative and reproductive shoot apical meristems, seeds, floral meristems and all floral organs.

It localises to the nucleus. The protein resides in the nucleoplasm. Its function is as follows. DNA-binding adapter subunit of the SEU-LUG transcriptional corepressor of the C class floral homeotic gene AGAMOUS during the early stages of floral meristem development. Is part of the A class cadastral complex that define the boundaries between the A and C class homeotic genes expression and function. Interacts together with APETALA2 and LEUNIG to repress AGAMOUS expression. In association with LUG, regulates petal shape through AGAMOUS-independent mechanisms. Controls cell division during petal development and enable the proper patterning of petal blade vasculature. Required for the proper elaboration of petal polarity along the adaxial/abaxial axis. May act through direct or indirect regulation of PHABULOSA and YAB1 and thus regulate cellular proliferation within the developing petal blade. In association with AINTEGUMENTA (ANT), coordinates patterning cues and cellular proliferation along the three positional axes of the developing gynoecium. Required for the development of the medial ridge and subsequent ovule initiation. This is Transcriptional corepressor SEUSS (SEU) from Arabidopsis thaliana (Mouse-ear cress).